Consider the following 32-residue polypeptide: MFDLTGKHVCYVADCGGIALETSXVLMTKNIA.

11–32 (YVADCGGIALETSXVLMTKNIA) contacts NAD(+).

This sequence belongs to the short-chain dehydrogenases/reductases (SDR) family.

The protein is Alcohol dehydrogenase-related 31 kDa protein (Adhr) of Drosophila yakuba (Fruit fly).